Reading from the N-terminus, the 438-residue chain is Protein pop-1 (438 aa).

Residues 1 to 39 (MMADEELGDEVKVFRRDEDADDDPMISGETSEQQLADDK) form a disordered region. Positions 1-45 (MMADEELGDEVKVFRRDEDADDDPMISGETSEQQLADDKKEAVME) are sufficient for interaction with beta-catenin/sys-1. Residues 9–18 (DEVKVFRRDE) show a composition bias toward basic and acidic residues. Residues 88-130 (AALPMFMPLFMNPYAAALRSPSLMFPMGAMSPTFPMFPPSPVY) form an involved in nuclear asymmetry region. 2 positions are modified to phosphoserine; by LIT1: Ser-118 and Ser-127. Residues 192–262 (VKKPLNAFMW…THKERYPEWS (71 aa)) constitute a DNA-binding region (HMG box). The segment covering 250-263 (DKETHKERYPEWSA) has biased composition (basic and acidic residues). Disordered regions lie at residues 250 to 288 (DKETHKERYPEWSARENYAVNKKKTKKRRDKSIPSENND), 318 to 351 (TDRSGGSDITDSQDGRGTSGAYSSSSESPSPKAN), and 378 to 438 (TTGA…MCTI). Positions 270–279 (NKKKTKKRRD) are enriched in basic residues. Composition is skewed to polar residues over residues 324-339 (SDITDSQDGRGTSGAY) and 378-395 (TTGASTHVPSPLASSSAG). Acidic residues predominate over residues 406–418 (SESDVEEEEDEQI).

This sequence belongs to the TCF/LEF family. In terms of assembly, interacts (via N-terminal region) with beta-catenin homolog sys-1. Interacts with hda-1. Interacts with bar-1. Interacts with par-5; the interaction is direct and is enhanced by lit-1-mediated pop-1 phosphorylation. The interaction also leads to the subsequent nuclear export of pop-1. Interacts (when phosphorylated on Ser-118 and Ser-127) with lit-1; the interaction is dependent on the beta-catenin-lit-1 complex. Interacts with wrm-1. Interacts with homeobox protein egl-5. Interacts with zinc finger transcription factor ref-2; the interaction is direct and facilitates transcriptional activation; transcription may be repressed by beta-catenin/sys-1. Post-translationally, phosphorylated on Ser-118 and Ser-127 by lit-1 in the beta-catenin-lit-1 complex. Phosphorylation promotes the interaction of pop-1 and par-5 and the subsequent translocation of pop-1 from the nucleus to the cytoplasm.

It localises to the nucleus. Its subcellular location is the cytoplasm. Functionally, transcription factor. Part of the Wnt signaling asymmetry pathway. Binds to the consensus sequence, 5'-(C/T)TTTG(A/T)(A/T)(G/C)-3'. Activates or represses target gene expression, depending on upstream Wnt signals and interactions with transcription co-regulators, such as beta-catenin/sys-1 or zinc finger transcription factor ref-2. Essential for the specification of the mesodermal and endodermal cell fates in early embryos. Required in many asymmetrical cell divisions in the early embryo and during larval development. Reciprocal distribution patterns of sys-1 and pop-1 in the daughters of anterior-posterior cell divisions functions in specifying cell fate; a higher sys-1 to pop-1 ratio promotes the posterior cell fate, whereas a low sys-1 to pop-1 ratio promotes the anterior fate. Involved in modulating nuclear localization or nuclear retention of sys-1. Involved in the terminal asymmetrical division of many embryonic neuroblasts; for example in the SMDD/AIY neuron lineage. In complex with ref-2, positively modulates expression of LIM/homeobox protein ttx-3 in anterior daughter cells of the SMDD/AIY lineage. Required for asymmetrical division of somatic gonadal precursor descendants which initiate axis formation required to control organ shape. Similarly, involved in asymmetrical division of seam cells, a stem cell-like lineage. Represses expression of target genes via its interaction with hda-1 histone deacetylase. Required for specification of the M lineage-derived coelomocyte and sex myoblast fate. Regulates coelomocyte fate by positively regulating proliferation and ceh-34 and possibly eya-1 expression in M.dlpa and M.drpa precursors. This Caenorhabditis elegans protein is Protein pop-1.